We begin with the raw amino-acid sequence, 143 residues long: Regulator of ribonuclease activity B (143 aa).

Positions 117–135 are enriched in acidic residues; that stretch reads DPDAEYDDEDGENEDDESE. The interval 117–143 is disordered; that stretch reads DPDAEYDDEDGENEDDESESDKSSRLH.

It belongs to the RraB family. Interacts with the C-terminal region of Rne.

Its subcellular location is the cytoplasm. Functionally, globally modulates RNA abundance by binding to RNase E (Rne) and regulating its endonucleolytic activity. Can modulate Rne action in a substrate-dependent manner by altering the composition of the degradosome. In Proteus mirabilis (strain HI4320), this protein is Regulator of ribonuclease activity B.